The primary structure comprises 236 residues: Urease accessory protein UreF (236 aa).

This sequence belongs to the UreF family. UreD, UreF and UreG form a complex that acts as a GTP-hydrolysis-dependent molecular chaperone, activating the urease apoprotein by helping to assemble the nickel containing metallocenter of UreC. The UreE protein probably delivers the nickel.

The protein localises to the cytoplasm. In terms of biological role, required for maturation of urease via the functional incorporation of the urease nickel metallocenter. The sequence is that of Urease accessory protein UreF from Granulibacter bethesdensis (strain ATCC BAA-1260 / CGDNIH1).